A 147-amino-acid polypeptide reads, in one-letter code: Large ribosomal subunit protein bL9 (147 aa).

The protein belongs to the bacterial ribosomal protein bL9 family.

In terms of biological role, binds to the 23S rRNA. The chain is Large ribosomal subunit protein bL9 from Campylobacter fetus subsp. fetus (strain 82-40).